Here is a 165-residue protein sequence, read N- to C-terminus: uncharacterized protein (165 aa).

Residues 8 to 159 (LLVNYKTLEE…QGVQEQTTKP (152 aa)) form the N-acetyltransferase domain.

This is an uncharacterized protein from Shouchella clausii (strain KSM-K16) (Alkalihalobacillus clausii).